Here is a 268-residue protein sequence, read N- to C-terminus: Centromere protein Q (268 aa).

Residues 1–31 (MSGKANASKKNFEQLKRNPKRKKDNEEVVLS) are disordered. Ser31 is modified (phosphoserine). Residues 170–203 (ELMTGNIQSLKNKIQILASEVEEEEERVKQIHQI) adopt a coiled-coil conformation. The residue at position 249 (Ser249) is a Phosphoserine.

It belongs to the CENP-Q/OKP1 family. In terms of assembly, component of the CENPA-CAD complex, composed of CENPI, CENPK, CENPL, CENPO, CENPP, CENPQ, CENPR and CENPS. The CENPA-CAD complex interacts with the CENPA-NAC complex, at least composed of CENPA, CENPC, CENPH, CENPM, CENPN, CENPT and CENPU.

It localises to the nucleus. The protein resides in the chromosome. It is found in the centromere. Functionally, component of the CENPA-CAD (nucleosome distal) complex, a complex recruited to centromeres which is involved in assembly of kinetochore proteins, mitotic progression and chromosome segregation. May be involved in incorporation of newly synthesized CENPA into centromeres via its interaction with the CENPA-NAC complex. Plays an important role in chromosome congression and in the recruitment of CENP-O complex (which comprises CENPO, CENPP, CENPQ and CENPU), CENPE and PLK1 to the kinetochores. The sequence is that of Centromere protein Q (CENPQ) from Macaca fascicularis (Crab-eating macaque).